We begin with the raw amino-acid sequence, 88 residues long: Acylphosphatase (88 aa).

The Acylphosphatase-like domain occupies 3-88 (AARFVVSGVV…VPPTEDFVTG (86 aa)). Catalysis depends on residues Arg18 and Asn36.

This sequence belongs to the acylphosphatase family.

It carries out the reaction an acyl phosphate + H2O = a carboxylate + phosphate + H(+). In Xanthomonas oryzae pv. oryzae (strain MAFF 311018), this protein is Acylphosphatase (acyP).